The following is a 513-amino-acid chain: Maturase K (513 aa).

Belongs to the intron maturase 2 family. MatK subfamily.

The protein localises to the plastid. It is found in the chloroplast. In terms of biological role, usually encoded in the trnK tRNA gene intron. Probably assists in splicing its own and other chloroplast group II introns. In Saccharum officinarum (Sugarcane), this protein is Maturase K.